Here is a 318-residue protein sequence, read N- to C-terminus: Bis(5'-nucleosyl)-tetraphosphatase, symmetrical (318 aa).

A disordered region spans residues 269–318 (PGREVTGPAPVARAPRRPRERQGRQRSRGNRGNAGNAAAGPKPSVDTPQD). A compositionally biased stretch (basic residues) spans 282–297 (APRRPRERQGRQRSRG). Residues 298 to 311 (NRGNAGNAAAGPKP) are compositionally biased toward low complexity.

Belongs to the Ap4A hydrolase family.

It catalyses the reaction P(1),P(4)-bis(5'-adenosyl) tetraphosphate + H2O = 2 ADP + 2 H(+). Functionally, hydrolyzes diadenosine 5',5'''-P1,P4-tetraphosphate to yield ADP. The sequence is that of Bis(5'-nucleosyl)-tetraphosphatase, symmetrical from Xanthomonas euvesicatoria pv. vesicatoria (strain 85-10) (Xanthomonas campestris pv. vesicatoria).